A 352-amino-acid polypeptide reads, in one-letter code: Putative killer cell immunoglobulin-like receptor-like protein KIR3DX1 (352 aa).

The first 16 residues, 1–16, serve as a signal peptide directing secretion; sequence MAPKLITVLCLGFCLN. Ig-like C2-type domains lie at 17–112 and 224–311; these read QKIC…NSLK and PSLS…VTRC. Disulfide bonds link Cys-49-Cys-94 and Cys-244-Cys-295. Residue Asn-78 is glycosylated (N-linked (GlcNAc...) asparagine).

Expressed in NK-cells.

The protein localises to the secreted. The sequence is that of Putative killer cell immunoglobulin-like receptor-like protein KIR3DX1 (KIR3DX1) from Homo sapiens (Human).